The primary structure comprises 225 residues: NAD(P)H-quinone oxidoreductase subunit K, chloroplastic (225 aa).

[4Fe-4S] cluster-binding residues include Cys43, Cys44, Cys108, and Cys139.

The protein belongs to the complex I 20 kDa subunit family. NDH is composed of at least 16 different subunits, 5 of which are encoded in the nucleus. The cofactor is [4Fe-4S] cluster.

It is found in the plastid. It localises to the chloroplast thylakoid membrane. It catalyses the reaction a plastoquinone + NADH + (n+1) H(+)(in) = a plastoquinol + NAD(+) + n H(+)(out). It carries out the reaction a plastoquinone + NADPH + (n+1) H(+)(in) = a plastoquinol + NADP(+) + n H(+)(out). Its function is as follows. NDH shuttles electrons from NAD(P)H:plastoquinone, via FMN and iron-sulfur (Fe-S) centers, to quinones in the photosynthetic chain and possibly in a chloroplast respiratory chain. The immediate electron acceptor for the enzyme in this species is believed to be plastoquinone. Couples the redox reaction to proton translocation, and thus conserves the redox energy in a proton gradient. In Brachypodium distachyon (Purple false brome), this protein is NAD(P)H-quinone oxidoreductase subunit K, chloroplastic.